We begin with the raw amino-acid sequence, 378 residues long: Cytochrome P450 2C15 (378 aa).

Residue Cys323 coordinates heme.

This sequence belongs to the cytochrome P450 family. It depends on heme as a cofactor.

The protein resides in the endoplasmic reticulum membrane. It localises to the microsome membrane. The enzyme catalyses an organic molecule + reduced [NADPH--hemoprotein reductase] + O2 = an alcohol + oxidized [NADPH--hemoprotein reductase] + H2O + H(+). Cytochromes P450 are a group of heme-thiolate monooxygenases. In liver microsomes, this enzyme is involved in an NADPH-dependent electron transport pathway. It oxidizes a variety of structurally unrelated compounds, including steroids, fatty acids, and xenobiotics. In Oryctolagus cuniculus (Rabbit), this protein is Cytochrome P450 2C15 (CYP2C15).